The sequence spans 285 residues: Bifunctional protein FolD (285 aa).

NADP(+) contacts are provided by residues 166–168 (GAS) and Ile-232.

This sequence belongs to the tetrahydrofolate dehydrogenase/cyclohydrolase family. As to quaternary structure, homodimer.

It catalyses the reaction (6R)-5,10-methylene-5,6,7,8-tetrahydrofolate + NADP(+) = (6R)-5,10-methenyltetrahydrofolate + NADPH. The enzyme catalyses (6R)-5,10-methenyltetrahydrofolate + H2O = (6R)-10-formyltetrahydrofolate + H(+). It participates in one-carbon metabolism; tetrahydrofolate interconversion. Catalyzes the oxidation of 5,10-methylenetetrahydrofolate to 5,10-methenyltetrahydrofolate and then the hydrolysis of 5,10-methenyltetrahydrofolate to 10-formyltetrahydrofolate. In Pseudoalteromonas atlantica (strain T6c / ATCC BAA-1087), this protein is Bifunctional protein FolD.